The primary structure comprises 168 residues: Small ribosomal subunit protein uS5 (168 aa).

One can recognise an S5 DRBM domain in the interval 11-74 (YSEKVVKIDR…ESAKKHLVKI (64 aa)).

It belongs to the universal ribosomal protein uS5 family. In terms of assembly, part of the 30S ribosomal subunit. Contacts proteins S4 and S8.

Functionally, with S4 and S12 plays an important role in translational accuracy. In terms of biological role, located at the back of the 30S subunit body where it stabilizes the conformation of the head with respect to the body. This is Small ribosomal subunit protein uS5 from Leptospira interrogans serogroup Icterohaemorrhagiae serovar copenhageni (strain Fiocruz L1-130).